The following is a 326-amino-acid chain: Vascular endothelial growth factor D (326 aa).

Residues 1-21 form the signal peptide; the sequence is MYGEWAAVNILMMSYVYLVQG. The propeptide occupies 22–93; the sequence is FSIEHRAVKD…SRSTSHRSTR (72 aa). 3 disulfides stabilise this stretch: Cys-116–Cys-158, Cys-147–Cys-194, and Cys-151–Cys-196. Residues Asn-160 and Asn-190 are each glycosylated (N-linked (GlcNAc...) asparagine). Positions 211–326 are excised as a propeptide; it reads SIQIPEEDQC…CRSMVFSLSP (116 aa). The 1; approximate repeat unit spans residues 227–242; it reads CPVDMLWDNTKCKCVL. The interval 227-317 is 4 X 16 AA repeats of C-X(10)-C-X-C-X(1,3)-C; it reads CPVDMLWDNT…KHKMFHPDTC (91 aa). A run of 2 repeats spans residues 263-278 and 282-298. Asn-292 carries N-linked (GlcNAc...) asparagine glycosylation. The stretch at 306 to 317 is one 4; truncated repeat; it reads CQKHKMFHPDTC.

The protein belongs to the PDGF/VEGF growth factor family. As to quaternary structure, homodimer; non-covalent and antiparallel. In terms of processing, undergoes a complex proteolytic maturation which generates a variety of processed secreted forms with increased activity toward VEGFR-3 and VEGFR-2. VEGF-D first form an antiparallel homodimer linked by disulfide bonds before secretion. The fully processed VEGF-D is composed mostly of two VEGF homology domains (VHDs) bound by non-covalent interactions. In terms of tissue distribution, highly expressed in the spleen, kidney, lung, tongue, ovary and mammary gland.

It localises to the secreted. In terms of biological role, growth factor active in angiogenesis, lymphangiogenesis and endothelial cell growth, stimulating their proliferation and migration and also has effects on the permeability of blood vessels. May function in the formation of the venous and lymphatic vascular systems during embryogenesis, and also in the maintenance of differentiated lymphatic endothelium in adults. Binds and activates VEGFR-3 (Flt4) receptor. This is Vascular endothelial growth factor D from Rattus norvegicus (Rat).